We begin with the raw amino-acid sequence, 388 residues long: Succinyl-diaminopimelate desuccinylase (388 aa).

Residue H72 coordinates Zn(2+). D74 is an active-site residue. Residue D105 participates in Zn(2+) binding. The Proton acceptor role is filled by E139. Positions 140, 168, and 353 each coordinate Zn(2+).

Belongs to the peptidase M20A family. DapE subfamily. As to quaternary structure, homodimer. The cofactor is Zn(2+). Co(2+) serves as cofactor.

The catalysed reaction is N-succinyl-(2S,6S)-2,6-diaminopimelate + H2O = (2S,6S)-2,6-diaminopimelate + succinate. Its pathway is amino-acid biosynthesis; L-lysine biosynthesis via DAP pathway; LL-2,6-diaminopimelate from (S)-tetrahydrodipicolinate (succinylase route): step 3/3. Its function is as follows. Catalyzes the hydrolysis of N-succinyl-L,L-diaminopimelic acid (SDAP), forming succinate and LL-2,6-diaminopimelate (DAP), an intermediate involved in the bacterial biosynthesis of lysine and meso-diaminopimelic acid, an essential component of bacterial cell walls. In Orientia tsutsugamushi (strain Ikeda) (Rickettsia tsutsugamushi), this protein is Succinyl-diaminopimelate desuccinylase.